Here is a 79-residue protein sequence, read N- to C-terminus: Small ribosomal subunit protein bS16c (79 aa).

This sequence belongs to the bacterial ribosomal protein bS16 family.

The protein localises to the plastid. It localises to the chloroplast. The protein is Small ribosomal subunit protein bS16c of Thalassiosira pseudonana (Marine diatom).